Reading from the N-terminus, the 548-residue chain is Solute carrier family 22 member 7 (548 aa).

A helical membrane pass occupies residues 21-41 (VALLALPRVLLPLHFLLPIFL). Residue N91 is glycosylated (N-linked (GlcNAc...) asparagine). 11 consecutive transmembrane segments (helical) span residues 146–166 (AAST…GYLS), 180–200 (VSTL…MFAI), 204–224 (LTGS…LEWL), 234–254 (VLSS…GYLI), 259–279 (WLLL…WWVP), 346–366 (ISLC…GLSL), 376–397 (YQTQ…YLSV), 404–423 (LTQA…RLLV), 432–452 (TVLA…AYLF), 466–486 (MGLT…AALL), and 493–513 (LPKL…LLLP). The active-site Important for glutamate counteranion efflux is the F441. Residues 522 to 548 (ETIQDVERKSAPTSLQEEEMPMKQVQN) form a disordered region.

Belongs to the major facilitator (TC 2.A.1) superfamily. Organic cation transporter (TC 2.A.1.19) family. Mainly expressed in liver and kidney. In kidney, expressed in proximal tubular cells. Also expressed in pancreas, small intestine, spinal cord, lung, brain and heart. Expressed in fetal liver.

The protein localises to the basolateral cell membrane. It is found in the apical cell membrane. The protein resides in the cell membrane. Its subcellular location is the cytoplasm. It localises to the cytosol. The catalysed reaction is orotate(out) + L-glutamate(in) = orotate(in) + L-glutamate(out). The enzyme catalyses 3',5'-cyclic GMP(in) = 3',5'-cyclic GMP(out). It catalyses the reaction GMP(in) = GMP(out). It carries out the reaction 2'-deoxyguanosine(in) = 2'-deoxyguanosine(out). The catalysed reaction is GDP(in) = GDP(out). The enzyme catalyses guanosine(in) = guanosine(out). It catalyses the reaction GTP(in) = GTP(out). It carries out the reaction 3',5'-cyclic AMP(in) = 3',5'-cyclic AMP(out). The catalysed reaction is creatinine(in) = creatinine(out). The enzyme catalyses prostaglandin E2(out) = prostaglandin E2(in). It catalyses the reaction 2-oxoglutarate(in) = 2-oxoglutarate(out). It carries out the reaction glutarate(in) = glutarate(out). The catalysed reaction is urate(out) = urate(in). The enzyme catalyses estrone 3-sulfate(out) = estrone 3-sulfate(in). It catalyses the reaction prostaglandin F2alpha(out) = prostaglandin F2alpha(in). In terms of biological role, functions as a Na(+)-independent bidirectional multispecific transporter. Contributes to the renal and hepatic elimination of endogenous organic compounds from the systemic circulation into the urine and bile, respectively. Capable of transporting a wide range of purine and pyrimidine nucleobases, nucleosides and nucleotides, with cGMP, 2'deoxyguanosine and GMP being the preferred substrates. Functions as a pH- and chloride-independent cGMP bidirectional facilitative transporter that can regulate both intracellular and extracellular levels of cGMP and may be involved in cGMP signaling pathways. Mediates orotate/glutamate bidirectional exchange and most likely display a physiological role in hepatic release of glutamate into the blood. Involved in renal secretion and possible reabsorption of creatinine. Able to uptake prostaglandin E2 (PGE2) and may contribute to PGE2 renal excretion. Also transports alpha-ketoglutarate and urate. Apart from the orotate/glutamate exchange, the counterions for the uptake of other SLC22A7/OAT2 substrates remain to be identified. Its function is as follows. Non functional transporter. Involved in the uptake of prostaglandin F2-alpha (PGF2-alpha). The protein is Solute carrier family 22 member 7 of Homo sapiens (Human).